The sequence spans 171 residues: Adenine phosphoribosyltransferase (171 aa).

This sequence belongs to the purine/pyrimidine phosphoribosyltransferase family. Homodimer.

The protein resides in the cytoplasm. The catalysed reaction is AMP + diphosphate = 5-phospho-alpha-D-ribose 1-diphosphate + adenine. It participates in purine metabolism; AMP biosynthesis via salvage pathway; AMP from adenine: step 1/1. Its function is as follows. Catalyzes a salvage reaction resulting in the formation of AMP, that is energically less costly than de novo synthesis. The chain is Adenine phosphoribosyltransferase from Nitrosococcus oceani (strain ATCC 19707 / BCRC 17464 / JCM 30415 / NCIMB 11848 / C-107).